A 432-amino-acid polypeptide reads, in one-letter code: Adenylosuccinate synthetase (432 aa).

GTP-binding positions include 13-19 and 41-43; these read GDEGKGK and GHT. D14 (proton acceptor) is an active-site residue. 2 residues coordinate Mg(2+): D14 and G41. IMP-binding positions include 14-17, 39-42, T131, R145, Q226, T241, and R305; these read DEGK and NAGH. Catalysis depends on H42, which acts as the Proton donor. 301 to 307 serves as a coordination point for substrate; the sequence is SVTGRAR. GTP-binding positions include R307, 333–335, and 416–418; these read KLD and STG.

This sequence belongs to the adenylosuccinate synthetase family. In terms of assembly, homodimer. Mg(2+) is required as a cofactor.

Its subcellular location is the cytoplasm. It catalyses the reaction IMP + L-aspartate + GTP = N(6)-(1,2-dicarboxyethyl)-AMP + GDP + phosphate + 2 H(+). It participates in purine metabolism; AMP biosynthesis via de novo pathway; AMP from IMP: step 1/2. Plays an important role in the de novo pathway of purine nucleotide biosynthesis. Catalyzes the first committed step in the biosynthesis of AMP from IMP. This is Adenylosuccinate synthetase from Neisseria gonorrhoeae (strain ATCC 700825 / FA 1090).